The chain runs to 189 residues: Large ribosomal subunit protein bL25 (189 aa).

It belongs to the bacterial ribosomal protein bL25 family. CTC subfamily. As to quaternary structure, part of the 50S ribosomal subunit; part of the 5S rRNA/L5/L18/L25 subcomplex. Contacts the 5S rRNA. Binds to the 5S rRNA independently of L5 and L18.

Its function is as follows. This is one of the proteins that binds to the 5S RNA in the ribosome where it forms part of the central protuberance. The polypeptide is Large ribosomal subunit protein bL25 (Azobacteroides pseudotrichonymphae genomovar. CFP2).